The sequence spans 127 residues: Photosystem II extrinsic protein U (127 aa).

The N-terminal stretch at 1 to 31 is a signal peptide; it reads MSRLFRRLSTLLLCSLLVLGVWLTQPLSVQA.

The protein belongs to the PsbU family. PSII is composed of 1 copy each of membrane proteins PsbA, PsbB, PsbC, PsbD, PsbE, PsbF, PsbH, PsbI, PsbJ, PsbK, PsbL, PsbM, PsbT, PsbX, PsbY, PsbZ, Psb30/Ycf12, peripheral proteins PsbO, CyanoQ (PsbQ), PsbU, PsbV and a large number of cofactors. It forms dimeric complexes.

Its subcellular location is the cellular thylakoid membrane. Functionally, one of the extrinsic, lumenal subunits of photosystem II (PSII). PSII is a light-driven water plastoquinone oxidoreductase, using light energy to abstract electrons from H(2)O, generating a proton gradient subsequently used for ATP formation. The extrinsic proteins stabilize the structure of photosystem II oxygen-evolving complex (OEC), the ion environment of oxygen evolution and protect the OEC against heat-induced inactivation. The sequence is that of Photosystem II extrinsic protein U from Synechococcus sp. (strain RCC307).